The sequence spans 610 residues: Myoneurin (610 aa).

Residues 24–89 (CDCTIVIGEF…IYTGTLNLDS (66 aa)) enclose the BTB domain. Residues 169 to 197 (QGALAKKSSQTKKKKKAFNSPKTGQNKTV) form a disordered region. Short sequence motifs (nuclear localization signal) lie at residues 174 to 190 (KKSS…NSPK) and 257 to 262 (KRKRGK). Polar residues predominate over residues 188–197 (SPKTGQNKTV). A Phosphoserine modification is found at serine 289. C2H2-type zinc fingers lie at residues 302 to 324 (PMCN…MRIH), 330 to 352 (YVCH…VRTH), 358 to 381 (YKCE…RMHH), 387 to 409 (YKCD…ARKH), 415 to 437 (YVCD…VRRH), 443 to 465 (YVCD…SRKH), 471 to 493 (YICG…FRSH), and 499 to 522 (FICE…TKVH). Residues 521–556 (VHSGADKTLDSSAEDHTLSEQDSIQKSPLSETMDVK) form a disordered region. Basic and acidic residues predominate over residues 523–539 (SGADKTLDSSAEDHTLS). A compositionally biased stretch (polar residues) spans 540-550 (EQDSIQKSPLS).

This sequence belongs to the krueppel C2H2-type zinc-finger protein family. As to expression, mainly expressed in the neuromuscular system. Located in and around synaptic myonuclei in adult muscle. Expression is dysregulated after nerve injury. Also found in the testis, ovary and placenta.

It localises to the nucleus. This chain is Myoneurin (MYNN), found in Homo sapiens (Human).